The primary structure comprises 620 residues: Chaperone protein HscA homolog (620 aa).

The protein belongs to the heat shock protein 70 family.

Its function is as follows. Chaperone involved in the maturation of iron-sulfur cluster-containing proteins. Has a low intrinsic ATPase activity which is markedly stimulated by HscB. This chain is Chaperone protein HscA homolog, found in Pseudomonas fluorescens (strain ATCC BAA-477 / NRRL B-23932 / Pf-5).